The sequence spans 555 residues: Spermine oxidase (555 aa).

Residues alanine 35, glutamate 55, arginine 63, 79–80, and valine 261 contribute to the FAD site; that span reads TW. Residues 271–307 form a disordered region; sequence AHPRGPEIEPRGEGDHNHDTGEGGQSGENPQQGRWDE. Residues 274 to 291 are compositionally biased toward basic and acidic residues; sequence RGPEIEPRGEGDHNHDTG. FAD contacts are provided by residues glutamate 519 and 528-529; that span reads TT.

This sequence belongs to the flavin monoamine oxidase family. It depends on FAD as a cofactor. As to expression, widely expressed. Isoform 1 and isoform 2 are expressed at higher level in brain and skeletal muscle. Isoform 7 is found in brain and spleen, isoform 10 is widely expressed but found at lower level in heart, kidney, liver and lung.

The protein resides in the cytoplasm. It is found in the nucleus. It carries out the reaction spermine + O2 + H2O = 3-aminopropanal + spermidine + H2O2. It functions in the pathway amine and polyamine degradation; spermine degradation. In terms of biological role, flavoenzyme which catalyzes the oxidation of spermine to spermidine. Can also use N(1)-acetylspermine and spermidine as substrates, with different affinity depending on the isoform (isozyme) and on the experimental conditions. Plays an important role in the regulation of polyamine intracellular concentration and has the potential to act as a determinant of cellular sensitivity to the antitumor polyamine analogs. May contribute to beta-alanine production via aldehyde dehydrogenase conversion of 3-amino-propanal. The polypeptide is Spermine oxidase (Smox) (Mus musculus (Mouse)).